Here is a 141-residue protein sequence, read N- to C-terminus: Endoribonuclease YbeY (141 aa).

His-105, His-109, and Asp-115 together coordinate Zn(2+).

The protein belongs to the endoribonuclease YbeY family. Requires Zn(2+) as cofactor.

It is found in the cytoplasm. Single strand-specific metallo-endoribonuclease involved in late-stage 70S ribosome quality control and in maturation of the 3' terminus of the 16S rRNA. The chain is Endoribonuclease YbeY from Chlorobaculum parvum (strain DSM 263 / NCIMB 8327) (Chlorobium vibrioforme subsp. thiosulfatophilum).